A 201-amino-acid polypeptide reads, in one-letter code: Dimethylsulfoniopropionate lyase DddQ (201 aa).

Residues histidine 130, glutamate 134, tyrosine 136, and histidine 169 each contribute to the a divalent metal cation site.

It belongs to the non-heme iron-dependent dioxygenase family. As to quaternary structure, homodimer. It depends on a divalent metal cation as a cofactor.

The enzyme catalyses S,S-dimethyl-beta-propiothetin = acrylate + dimethyl sulfide + H(+). Functionally, may act as a dimethylsulfoniopropionate (DMSP) in vitro, releasing dimethyl sulfide (DMS). DMS is the principal form by which sulfur is transported from oceans to the atmosphere. The real activity of the protein is however subject to debate and it is unclear whether it constitutes a real dimethylsulfoniopropionate lyase in vivo. This chain is Dimethylsulfoniopropionate lyase DddQ, found in Ruegeria pomeroyi (strain ATCC 700808 / DSM 15171 / DSS-3) (Silicibacter pomeroyi).